Reading from the N-terminus, the 1045-residue chain is Extracellular serine protease (1045 aa).

Residues 1-27 (MILNKKLKLAYCVFLGCYGLSLHSSLA) form the signal peptide. Positions 49–396 (QWGLEAISAE…WGRVNLRDAI (348 aa)) constitute a Peptidase S8 domain. Catalysis depends on charge relay system residues D76, H112, and S341. A propeptide spanning residues 646–1045 (SLASTENDKE…SVNAGLTWRF (400 aa)) is cleaved from the precursor. The Autotransporter domain occupies 769–1045 (IKADDNGAWA…SVNAGLTWRF (277 aa)).

The protein belongs to the peptidase S8 family.

The protein resides in the secreted. This is Extracellular serine protease from Serratia marcescens.